Here is a 422-residue protein sequence, read N- to C-terminus: Serine--tRNA ligase (422 aa).

229–231 (TAE) provides a ligand contact to L-serine. ATP-binding positions include 260–262 (RRE) and valine 276. Glutamate 283 serves as a coordination point for L-serine. Position 349 to 352 (349 to 352 (EVTS)) interacts with ATP. Residue threonine 384 coordinates L-serine.

Belongs to the class-II aminoacyl-tRNA synthetase family. Type-1 seryl-tRNA synthetase subfamily. As to quaternary structure, homodimer. The tRNA molecule binds across the dimer.

The protein resides in the cytoplasm. It catalyses the reaction tRNA(Ser) + L-serine + ATP = L-seryl-tRNA(Ser) + AMP + diphosphate + H(+). The enzyme catalyses tRNA(Sec) + L-serine + ATP = L-seryl-tRNA(Sec) + AMP + diphosphate + H(+). Its pathway is aminoacyl-tRNA biosynthesis; selenocysteinyl-tRNA(Sec) biosynthesis; L-seryl-tRNA(Sec) from L-serine and tRNA(Sec): step 1/1. Catalyzes the attachment of serine to tRNA(Ser). Is also able to aminoacylate tRNA(Sec) with serine, to form the misacylated tRNA L-seryl-tRNA(Sec), which will be further converted into selenocysteinyl-tRNA(Sec). In Treponema denticola (strain ATCC 35405 / DSM 14222 / CIP 103919 / JCM 8153 / KCTC 15104), this protein is Serine--tRNA ligase.